A 62-amino-acid polypeptide reads, in one-letter code: Negative regulatory protein YxlE (62 aa).

The next 2 helical transmembrane spans lie at 7–27 (MILP…ISCI) and 37–57 (WMWA…FFTV).

The protein resides in the cell membrane. In terms of biological role, together with YxlD is important for negative regulation of sigma Y activity. In Bacillus subtilis (strain 168), this protein is Negative regulatory protein YxlE (yxlE).